The following is an 850-amino-acid chain: MEPLKNLFLKSPLGSWNGSGSGGGGGTGGVRPEGSPKATAAYANPVWTALFDYEPNGQDELALRKGDRVEVLSRDAAISGDEGWWAGQVGGQVGIFPSNYVSRGGGPPPCEVASFQELRLEEVIGIGGFGKVYRGSWRGELVAVKAARQDPDEDISVTAESVRQEARLFAMLAHPNIIALKAVCLEEPNLCLVMEYAAGGPLSRALAGRRVPPHVLVNWAVQIARGMHYLHCEALVPVIHRDLKSNNILLLQPIEGDDMEHKTLKITDFGLAREWHKTTQMSAAGTYAWMAPEVIKASTFSKGSDVWSFGVLLWELLTGEVPYRGIDCLAVAYGVAVNKLTLPIPSTCPEPFAQLMADCWAQDPHRRPDFASILQQLEALEAQVLREMPRDSFHSMQEGWKREIQGLFDELRAKEKELLSREEELTRAAREQRSQAEQLRRREHLLAQWELEVFERELTLLLQQVDRERPHVRRRRGTFKRSKLRARDGGERISMPLDFKHRITVQASPGLDRRRNVFEVGAGDSPTFPRFRAIQLEPTESGQTWGRQSPRRLEDSSNGERRACWAWGPSSPKPGEAQNGRRRSRMDEATWYLDSDDSSPLGSPSTPPALNGNPPRPSPEPEEPRRAGPTERGNSSGTPKLIQRALLRGTALLASLGLGRDLQPPGGLSRERGESPTAPPPAQMPSPCPPELPSTPLIRLSQTTPDAHSSPTPGPLLLDLGVPSGQPSAKSPRREETRGRTVSPPPGISRSAPGTPGTPRSPPLGLISRPRPSPLRSRIDPWSFVSAGPRPSPLPSPQPAPRRAPWTLFPDSDPFWDSPPANPFRGGSQDCRTQTKDMGAQAPWAPEAGP.

Position 11 is a phosphoserine (Ser11). The tract at residues 16-35 is disordered; the sequence is WNGSGSGGGGGTGGVRPEGS. Over residues 17-31 the composition is skewed to gly residues; the sequence is NGSGSGGGGGTGGVR. A Phosphoserine modification is found at Ser35. The region spanning 42–106 is the SH3 domain; it reads YANPVWTALF…PSNYVSRGGG (65 aa). In terms of domain architecture, Protein kinase spans 118 to 380; the sequence is LRLEEVIGIG…ASILQQLEAL (263 aa). Residues 124–132 and Lys145 each bind ATP; that span reads IGIGGFGKV. The active-site Proton acceptor is the Asp242. Thr278 is modified (phosphothreonine; by autocatalysis). A Phosphoserine; by autocatalysis and MAP4K1 modification is found at Ser282. Ser395 bears the Phosphoserine mark. Leucine-zipper stretches follow at residues 404–425 and 439–460; these read IQGL…EEEL and LRRR…ELTL. Phosphoserine is present on residues Ser508 and Ser525. The segment at 535 to 644 is disordered; sequence QLEPTESGQT…SSGTPKLIQR (110 aa). The segment covering 538–547 has biased composition (polar residues); the sequence is PTESGQTWGR. Residues Ser549, Ser556, and Ser557 each carry the phosphoserine modification. The span at 551–563 shows a compositional bias: basic and acidic residues; sequence RRLEDSSNGERRA. The segment covering 598 to 610 has biased composition (low complexity); the sequence is SSPLGSPSTPPAL. Ser655 is modified (phosphoserine). A disordered region spans residues 657 to 850; that stretch reads GLGRDLQPPG…QAPWAPEAGP (194 aa). Over residues 677 to 693 the composition is skewed to pro residues; the sequence is TAPPPAQMPSPCPPELP. The segment covering 700–711 has biased composition (polar residues); the sequence is LSQTTPDAHSSP. The residue at position 709 (Ser709) is a Phosphoserine. At Thr712 the chain carries Phosphothreonine. A phosphoserine mark is found at Ser728, Ser731, Ser743, Ser751, Ser761, Ser773, Ser792, Ser796, and Ser818. The segment covering 763 to 776 has biased composition (low complexity); that stretch reads PLGLISRPRPSPLR. Residues 790–802 show a composition bias toward pro residues; it reads RPSPLPSPQPAPR. Residues 803–819 show a composition bias toward low complexity; sequence RAPWTLFPDSDPFWDSP.

Belongs to the protein kinase superfamily. STE Ser/Thr protein kinase family. MAP kinase kinase kinase subfamily. As to quaternary structure, homodimer; undergoes dimerization during activation. Interacts with MAP2K4/MKK4 and MAP2K7/MKK7. Found in a complex with SH3RF1, RAC1, MAP2K7/MKK7, MAPK8IP1/JIP1 and MAPK8/JNK1. It depends on Mg(2+) as a cofactor. Autophosphorylation on serine and threonine residues within the activation loop plays a role in enzyme activation. Thr-278 is likely to be the main autophosphorylation site. Phosphorylation of Ser-556 and Ser-557 is induced by CDC42.

It localises to the cytoplasm. Its subcellular location is the cytoskeleton. The protein localises to the microtubule organizing center. It is found in the centrosome. The catalysed reaction is L-seryl-[protein] + ATP = O-phospho-L-seryl-[protein] + ADP + H(+). The enzyme catalyses L-threonyl-[protein] + ATP = O-phospho-L-threonyl-[protein] + ADP + H(+). Its activity is regulated as follows. Homodimerization via the leucine zipper domains is required for autophosphorylation and subsequent activation. Its function is as follows. Activates the JUN N-terminal pathway. Required for serum-stimulated cell proliferation and for mitogen and cytokine activation of MAPK14 (p38), MAPK3 (ERK) and MAPK8 (JNK1) through phosphorylation and activation of MAP2K4/MKK4 and MAP2K7/MKK7. Plays a role in mitogen-stimulated phosphorylation and activation of BRAF, but does not phosphorylate BRAF directly. Influences microtubule organization during the cell cycle. The protein is Mitogen-activated protein kinase kinase kinase 11 (Map3k11) of Mus musculus (Mouse).